Consider the following 236-residue polypeptide: Sperm flagellar protein 1 (236 aa).

Positions 7 to 112 (EEALHQLYLW…VLIPLRQRLE (106 aa)) constitute a Calponin-homology (CH) domain. The disordered stretch occupies residues 118–177 (RKQGIGSLQELAPQDGTDYMDVGLSQKARGEGVPDPQGRGQLREGRLPVPRPPGDSQALQ). The tract at residues 183–236 (ILQIAEKEQELLASQETVQVLQMKVRRLEHLLQLKNVRIEDLSRRLQQAERKQR) is essential for homodimerization and microtubule bundling activity.

As to quaternary structure, homodimer. Interacts with actin, TJP1, CGN and CDH1.

The protein resides in the cytoplasm. Its subcellular location is the cell projection. The protein localises to the cilium. It localises to the flagellum. It is found in the cytoskeleton. The protein resides in the cilium axoneme. Its subcellular location is the apical cell membrane. The protein localises to the basolateral cell membrane. It localises to the stress fiber. It is found in the microvillus. The protein resides in the lamellipodium. Its subcellular location is the filopodium. Its function is as follows. Microtubule-associated protein involved in the stabilization of microtubules along the axis of migration during radial intercalation. Promotes the establishment and stabilization of an axis of microtubules required for the active migration of cells into the outer epithelium. Microtubule-associated protein that promotes microtubule bundling and stabilizes microtubules against depolymerization in response to cold shock. Essential for ciliary central apparatus formation which requires both its microtubule-binding and bundling activities and for ciliary localization of HYDIN and SPAG6 in ependymal cilia. Binds actin in intestinal epithelial cells (IECs), essential for IECs survival and contributes to formation of filopodia and lamellipodia in migrating IECs. Regulates planar cell polarity signaling pathway and asymmetric microtubule accumulation in ciliated epithelia. The protein is Sperm flagellar protein 1 (SPEF1) of Bos taurus (Bovine).